The chain runs to 377 residues: Geranylgeranyl transferase type-1 subunit beta (377 aa).

PFTB repeat units lie at residues 144 to 186 (KEAC…YMLN), 193 to 234 (MKKA…CLMG), 245 to 284 (LNRIKRWCIMRQQNGYHGRPNKPVDTCYSFWVGATLKLLK), and 291 to 333 (FEKN…SLME). Residues 219–221 (HGG) and 263–266 (RPNK) contribute to the geranylgeranyl diphosphate site. The Zn(2+) site is built by Asp269 and Cys271. 272–275 (YSFW) lines the geranylgeranyl diphosphate pocket. Residue His321 coordinates Zn(2+).

It belongs to the protein prenyltransferase subunit beta family. Heterodimer of FNTA and PGGT1B. PGGT1B mediates interaction with substrate peptides. Zn(2+) is required as a cofactor. Requires Mg(2+) as cofactor.

It catalyses the reaction geranylgeranyl diphosphate + L-cysteinyl-[protein] = S-geranylgeranyl-L-cysteinyl-[protein] + diphosphate. In terms of biological role, catalyzes the transfer of a geranyl-geranyl moiety from geranyl-geranyl pyrophosphate to a cysteine at the fourth position from the C-terminus of proteins having the C-terminal sequence Cys-aliphatic-aliphatic-X. Known substrates include RAC1, RAC2, RAP1A and RAP1B. The chain is Geranylgeranyl transferase type-1 subunit beta (PGGT1B) from Bos taurus (Bovine).